The following is a 117-amino-acid chain: Large ribosomal subunit protein bL19 (117 aa).

Belongs to the bacterial ribosomal protein bL19 family.

This protein is located at the 30S-50S ribosomal subunit interface and may play a role in the structure and function of the aminoacyl-tRNA binding site. The sequence is that of Large ribosomal subunit protein bL19 from Azobacteroides pseudotrichonymphae genomovar. CFP2.